The following is a 557-amino-acid chain: Selenoprotein N (557 aa).

Positions 1–21 are enriched in basic and acidic residues; the sequence is MAADVDKTPAGEQKDDHEDRG. The tract at residues 1–28 is disordered; the sequence is MAADVDKTPAGEQKDDHEDRGTPSSRRG. A helical transmembrane segment spans residues 35–55; sequence ISSLFIIAAIPVIGVCIKYYL. Position 430 (Sec430) is a non-standard amino acid, selenocysteine. Asn451 and Asn499 each carry an N-linked (GlcNAc...) asparagine glycan.

Interacts with ryr3.

It localises to the endoplasmic reticulum membrane. Functionally, plays an important role in cell protection against oxidative stress and in the regulation of redox-related calcium homeostasis. Regulates the calcium level of the ER by protecting the calcium pump ATP2A2 against the oxidoreductase ERO1A-mediated oxidative damage. Acts as a modulator of ryanodine receptor (RyR) activity: protects RyR from oxidation due to increased oxidative stress, or directly controls the RyR redox state, regulating the RyR-mediated calcium mobilization required for normal muscle development and differentiation. Plays an important role in muscle development and differentiation during early development. Required for development of the slow muscle fiber lineage. Required for the correct organization and attachment of the myofibrils, as well as for the continuity and integrity of the connective tissue that forms the myoseptum. In Danio rerio (Zebrafish), this protein is Selenoprotein N.